Consider the following 262-residue polypeptide: R3H domain-containing protein 4 (262 aa).

Disordered stretches follow at residues 1-27 (MVALDNSEGGPEATPSGETRLSLPGCL) and 132-155 (YLEDESQGKRRRGPGRGEDRRRED). Residues 146–155 (GRGEDRRRED) are compositionally biased toward basic and acidic residues. The R3H domain occupies 182–245 (METLESWEER…RRQMKVSNRH (64 aa)).

The protein localises to the nucleus. The polypeptide is R3H domain-containing protein 4 (R3hdm4) (Mus musculus (Mouse)).